The chain runs to 255 residues: NAD kinase (255 aa).

Asp44 (proton acceptor) is an active-site residue. NAD(+) contacts are provided by residues 44 to 45 (DG), His49, 114 to 115 (NE), Asp144, Ala152, 155 to 160 (SAYNLS), and Gln216.

Belongs to the NAD kinase family. The cofactor is a divalent metal cation.

It localises to the cytoplasm. The catalysed reaction is NAD(+) + ATP = ADP + NADP(+) + H(+). Involved in the regulation of the intracellular balance of NAD and NADP, and is a key enzyme in the biosynthesis of NADP. Catalyzes specifically the phosphorylation on 2'-hydroxyl of the adenosine moiety of NAD to yield NADP. The chain is NAD kinase from Rickettsia akari (strain Hartford).